Here is a 245-residue protein sequence, read N- to C-terminus: Phycoerythrobilin:ferredoxin oxidoreductase (245 aa).

Belongs to the HY2 family.

The enzyme catalyses (3Z)-phycoerythrobilin + oxidized 2[4Fe-4S]-[ferredoxin] = 15,16-dihydrobiliverdin + reduced 2[4Fe-4S]-[ferredoxin] + 2 H(+). Its function is as follows. Catalyzes the two-electron reduction of the C2 and C3(1) diene system of 15,16-dihydrobiliverdin. This is Phycoerythrobilin:ferredoxin oxidoreductase (pebB) from Gloeobacter violaceus (strain ATCC 29082 / PCC 7421).